A 100-amino-acid polypeptide reads, in one-letter code: Small ribosomal subunit protein uS14c (100 aa).

Belongs to the universal ribosomal protein uS14 family. In terms of assembly, part of the 30S ribosomal subunit.

It is found in the plastid. The protein localises to the chloroplast. Its function is as follows. Binds 16S rRNA, required for the assembly of 30S particles. The protein is Small ribosomal subunit protein uS14c of Amborella trichopoda.